A 204-amino-acid polypeptide reads, in one-letter code: Holliday junction branch migration complex subunit RuvA (204 aa).

Positions 1-64 are domain I; it reads MIGRLQGILL…EDAHLLFGFA (64 aa). Positions 65 to 143 are domain II; sequence QKTDRTLFRE…GVKQSDFFVE (79 aa). The flexible linker stretch occupies residues 144 to 155; the sequence is STHIPLSPSIES. Residues 156–204 are domain III; the sequence is HSESSSDEAISALIALGYKPAEAEKMVKRVAKPELTSEQVIREALKAAL.

Belongs to the RuvA family. Homotetramer. Forms an RuvA(8)-RuvB(12)-Holliday junction (HJ) complex. HJ DNA is sandwiched between 2 RuvA tetramers; dsDNA enters through RuvA and exits via RuvB. An RuvB hexamer assembles on each DNA strand where it exits the tetramer. Each RuvB hexamer is contacted by two RuvA subunits (via domain III) on 2 adjacent RuvB subunits; this complex drives branch migration. In the full resolvosome a probable DNA-RuvA(4)-RuvB(12)-RuvC(2) complex forms which resolves the HJ.

The protein localises to the cytoplasm. Its function is as follows. The RuvA-RuvB-RuvC complex processes Holliday junction (HJ) DNA during genetic recombination and DNA repair, while the RuvA-RuvB complex plays an important role in the rescue of blocked DNA replication forks via replication fork reversal (RFR). RuvA specifically binds to HJ cruciform DNA, conferring on it an open structure. The RuvB hexamer acts as an ATP-dependent pump, pulling dsDNA into and through the RuvAB complex. HJ branch migration allows RuvC to scan DNA until it finds its consensus sequence, where it cleaves and resolves the cruciform DNA. The protein is Holliday junction branch migration complex subunit RuvA of Haemophilus influenzae (strain PittGG).